The sequence spans 932 residues: von Willebrand factor A domain-containing protein DDB_G0292028 (932 aa).

The segment at 1–49 is disordered; that stretch reads MNFIKKVIGGGSSKSKTDIKIEDEQHEQQHEQQHEKQQIPDKISTSKVN. Basic and acidic residues predominate over residues 15 to 39; the sequence is SKTDIKIEDEQHEQQHEQQHEKQQI. In terms of domain architecture, VIT spans 95-222; it reads LTSPGLNTKV…DVTVNITITS (128 aa). One can recognise a VWFA domain in the interval 342–521; that stretch reads EFIFVLDCSG…IAMQPTLSNI (180 aa). Disordered stretches follow at residues 661-752 and 800-834; these read QQIN…SQAQ and TSQI…STSS. Residues 677-686 are compositionally biased toward polar residues; it reads TRVQGSSSVF. Over residues 815-834 the composition is skewed to low complexity; the sequence is SSSPTIQKSSSLPSRPSTSS.

This Dictyostelium discoideum (Social amoeba) protein is von Willebrand factor A domain-containing protein DDB_G0292028.